Consider the following 48-residue polypeptide: Large ribosomal subunit protein bL33A (48 aa).

The protein belongs to the bacterial ribosomal protein bL33 family.

The chain is Large ribosomal subunit protein bL33A from Exiguobacterium sibiricum (strain DSM 17290 / CCUG 55495 / CIP 109462 / JCM 13490 / 255-15).